The chain runs to 266 residues: 5'-nucleotidase SurE (266 aa).

Positions 8, 9, 39, and 93 each coordinate a divalent metal cation.

It belongs to the SurE nucleotidase family. A divalent metal cation is required as a cofactor.

The protein localises to the cytoplasm. It carries out the reaction a ribonucleoside 5'-phosphate + H2O = a ribonucleoside + phosphate. Its function is as follows. Nucleotidase that shows phosphatase activity on nucleoside 5'-monophosphates. This is 5'-nucleotidase SurE from Pyrobaculum arsenaticum (strain DSM 13514 / JCM 11321 / PZ6).